The following is a 369-amino-acid chain: Chaperone protein DnaJ (369 aa).

The region spanning 5–70 (DYYEVLGVGR…NKRAAYDQFG (66 aa)) is the J domain. Residues 128 to 206 (GAETQIRIPR…CHGAGWVKRQ (79 aa)) form a CR-type zinc finger. Positions 141, 144, 158, 161, 180, 183, 194, and 197 each coordinate Zn(2+). CXXCXGXG motif repeat units follow at residues 141 to 148 (CDTCHGSG), 158 to 165 (CPTCNGHG), 180 to 187 (CSHCQGSG), and 194 to 201 (CGDCHGAG).

Belongs to the DnaJ family. In terms of assembly, homodimer. Zn(2+) is required as a cofactor.

Its subcellular location is the cytoplasm. In terms of biological role, participates actively in the response to hyperosmotic and heat shock by preventing the aggregation of stress-denatured proteins and by disaggregating proteins, also in an autonomous, DnaK-independent fashion. Unfolded proteins bind initially to DnaJ; upon interaction with the DnaJ-bound protein, DnaK hydrolyzes its bound ATP, resulting in the formation of a stable complex. GrpE releases ADP from DnaK; ATP binding to DnaK triggers the release of the substrate protein, thus completing the reaction cycle. Several rounds of ATP-dependent interactions between DnaJ, DnaK and GrpE are required for fully efficient folding. Also involved, together with DnaK and GrpE, in the DNA replication of plasmids through activation of initiation proteins. The protein is Chaperone protein DnaJ of Nitrosomonas europaea (strain ATCC 19718 / CIP 103999 / KCTC 2705 / NBRC 14298).